The primary structure comprises 503 residues: Carboxyl-terminal PDZ ligand of neuronal nitric oxide synthase protein (503 aa).

Residues 26–191 (FQHGISFEAK…ESERNSDGSG (166 aa)) form the PID domain. The tract at residues 170–212 (HTQQNADGQEDGESERNSDGSGDPGRQLTGAERVSTATAEETD) is disordered. Ser-183, Ser-187, Ser-190, and Ser-262 each carry phosphoserine. The tract at residues 266–285 (LLPSSSSSKPPGLGTGTPLS) is disordered. Residues 319–360 (AAEAAARLEAQARVHQLLLQNKDMLQHISLLVKQVQELELKL) adopt a coiled-coil conformation. Ser-368, Ser-371, Ser-398, and Ser-414 each carry phosphoserine. Residues 491–503 (QELGDSLDDEIAV) form an interaction with NOS1 region. A PDZ-binding motif is present at residues 501–503 (IAV).

In terms of assembly, interacts with the PDZ domain of NOS1 or the second PDZ domain of DLG4 through its C-terminus. Interacts with RASD1 and SYN1, SYN2 and SYN3 via its PID domain. Forms a ternary complex with NOS1 and RASD1. Forms a ternary complex with NOS1 and SYN1. In terms of tissue distribution, mainly expressed in brain. Highly expressed in accessory olfactory bulb, caudate-putamen, cerebellum, cerebral cortex, dentate gyrus of the hippocampus, islands of Calleja, olfactory bulb and supraoptic nucleus. Expressed in kidney glomeruli podocytes (at protein level).

It is found in the cell projection. It localises to the filopodium. The protein resides in the podosome. Adapter protein involved in neuronal nitric-oxide (NO) synthesis regulation via its association with nNOS/NOS1. The complex formed with NOS1 and synapsins is necessary for specific NO and synapsin functions at a presynaptic level. Mediates an indirect interaction between NOS1 and RASD1 leading to enhance the ability of NOS1 to activate RASD1. Competes with DLG4 for interaction with NOS1, possibly affecting NOS1 activity by regulating the interaction between NOS1 and DLG4. In kidney podocytes, plays a role in podosomes and filopodia formation through CDC42 activation. The sequence is that of Carboxyl-terminal PDZ ligand of neuronal nitric oxide synthase protein from Rattus norvegicus (Rat).